Here is a 214-residue protein sequence, read N- to C-terminus: Transcriptional activator protein ExaE (214 aa).

The Response regulatory domain occupies 2–118 (GILLVDDHPM…VVLEAVRRVL (117 aa)). A 4-aspartylphosphate modification is found at Asp53. The region spanning 143–208 (GNARLQGLTQ…ELVHLAIEAG (66 aa)) is the HTH luxR-type domain. Positions 167–186 (TRLIAQQLCISAKTVSNYLT) form a DNA-binding region, H-T-H motif.

Functionally, positive regulator of the expression of the gene qedA and the activity of ADH I but does not affect the activities of ADH IIB or ADH IIG. This chain is Transcriptional activator protein ExaE, found in Pseudomonas putida (Arthrobacter siderocapsulatus).